Consider the following 128-residue polypeptide: 3-aminoacrylate deaminase RutC (128 aa).

This sequence belongs to the RutC family.

It carries out the reaction (Z)-3-aminoacrylate + H2O + H(+) = 3-oxopropanoate + NH4(+). Functionally, involved in pyrimidine catabolism. Catalyzes the deamination of 3-aminoacrylate to malonic semialdehyde, a reaction that can also occur spontaneously. RutC may facilitate the reaction and modulate the metabolic fitness, rather than catalyzing essential functions. This chain is 3-aminoacrylate deaminase RutC, found in Azorhizobium caulinodans (strain ATCC 43989 / DSM 5975 / JCM 20966 / LMG 6465 / NBRC 14845 / NCIMB 13405 / ORS 571).